The sequence spans 60 residues: UPF0434 protein Daci_3569 (60 aa).

The protein belongs to the UPF0434 family.

The sequence is that of UPF0434 protein Daci_3569 from Delftia acidovorans (strain DSM 14801 / SPH-1).